Consider the following 201-residue polypeptide: MAEAAALEGSEPVDLTKHPSGIIPTLQNIVSTVNLDCKLDLKAIALQARNAEYNPKRFAAVIMRIREPKTTALIFASGKMVCTGAKSEQQSKLAARKYARIIQKLGFPAKFKDFKIQNIVASCDVKFPIRLEGLAYSHGAFSSYEPELFPGLIYRMRQPKIVLLIFVSGKIVLTGAKVREETYSAFENIYPVLTEFRKVQQ.

Tandem repeats lie at residues Leu26–Ile102 and Ile116–Leu193.

Belongs to the TBP family. Belongs to the TFIID complex together with the TBP-associated factors (TAFs). Binds DNA as monomer.

It is found in the nucleus. General transcription factor that functions at the core of the DNA-binding multiprotein factor TFIID. Binding of TFIID to the TATA box is the initial transcriptional step of the pre-initiation complex (PIC), playing a role in the activation of eukaryotic genes transcribed by RNA polymerase II. The protein is TATA-box-binding protein 2 (TBP2) of Triticum aestivum (Wheat).